The following is a 96-amino-acid chain: Protein Vpr (96 aa).

Residues 1-42 (MEQAPADQGPQREPYNEWALELLEELKSEAVRHFPRIWLHSL) form a homooligomerization region. A phosphoserine; by host mark is found at S79, S94, and S96.

The protein belongs to the HIV-1 VPR protein family. In terms of assembly, homooligomer, may form homodimer. Interacts with p6-gag region of the Pr55 Gag precursor protein through a (Leu-X-X)4 motif near the C-terminus of the P6gag protein. Interacts with host UNG. May interact with host RAD23A/HHR23A. Interacts with host VPRBP/DCAF1, leading to hijack the CUL4A-RBX1-DDB1-DCAF1/VPRBP complex, mediating ubiquitination of host proteins such as TERT and ZGPAT and arrest of the cell cycle in G2 phase. Phosphorylated on several residues by host. These phosphorylations regulate VPR activity for the nuclear import of the HIV-1 pre-integration complex.

Its subcellular location is the virion. It localises to the host nucleus. The protein resides in the host extracellular space. Functionally, during virus replication, may deplete host UNG protein, and incude G2-M cell cycle arrest. Acts by targeting specific host proteins for degradation by the 26S proteasome, through association with the cellular CUL4A-DDB1 E3 ligase complex by direct interaction with host VPRPB/DCAF-1. Cell cycle arrest reportedly occurs within hours of infection and is not blocked by antiviral agents, suggesting that it is initiated by the VPR carried into the virion. Additionally, VPR induces apoptosis in a cell cycle dependent manner suggesting that these two effects are mechanistically linked. Detected in the serum and cerebrospinal fluid of AIDS patient, VPR may also induce cell death to bystander cells. In terms of biological role, during virus entry, plays a role in the transport of the viral pre-integration (PIC) complex to the host nucleus. This function is crucial for viral infection of non-dividing macrophages. May act directly at the nuclear pore complex, by binding nucleoporins phenylalanine-glycine (FG)-repeat regions. The sequence is that of Protein Vpr from Human immunodeficiency virus type 1 group M subtype D (isolate ELI) (HIV-1).